Consider the following 378-residue polypeptide: Erythronate-4-phosphate dehydrogenase (378 aa).

The substrate site is built by S45 and T66. NAD(+) is bound by residues D146 and T175. R208 is an active-site residue. Residue D232 coordinates NAD(+). The active site involves E237. The Proton donor role is filled by H254. G257 lines the NAD(+) pocket. Substrate is bound at residue Y258.

The protein belongs to the D-isomer specific 2-hydroxyacid dehydrogenase family. PdxB subfamily. In terms of assembly, homodimer.

Its subcellular location is the cytoplasm. It catalyses the reaction 4-phospho-D-erythronate + NAD(+) = (R)-3-hydroxy-2-oxo-4-phosphooxybutanoate + NADH + H(+). It functions in the pathway cofactor biosynthesis; pyridoxine 5'-phosphate biosynthesis; pyridoxine 5'-phosphate from D-erythrose 4-phosphate: step 2/5. Its function is as follows. Catalyzes the oxidation of erythronate-4-phosphate to 3-hydroxy-2-oxo-4-phosphonooxybutanoate. The polypeptide is Erythronate-4-phosphate dehydrogenase (Escherichia coli O7:K1 (strain IAI39 / ExPEC)).